The sequence spans 114 residues: Transmembrane protein 256 (114 aa).

A signal peptide spans 1 to 25; the sequence is MNAASLVQRVAGISGALAVAAGAYG. Over 26–64 the chain is Extracellular; the sequence is AHGFRRSEASDYQRELFDTANKYHFYHSLALLGAARCRK. The chain crosses the membrane as a helical span at residues 65 to 85; sequence PALAGVILLTGMGCFCGPLYH. Over 86-93 the chain is Cytoplasmic; sequence QPLTNDPS. The helical transmembrane segment at 94-114 threads the bilayer; that stretch reads FSKLAPIGGSLLIVGWAAMAL.

The protein belongs to the TMEM256 family.

It localises to the membrane. The chain is Transmembrane protein 256 (tmem256) from Danio rerio (Zebrafish).